Reading from the N-terminus, the 250-residue chain is 5'-nucleotidase SurE (250 aa).

Residues Asp-8, Asp-9, Ser-40, and Asn-92 each coordinate a divalent metal cation.

It belongs to the SurE nucleotidase family. Requires a divalent metal cation as cofactor.

It is found in the cytoplasm. The enzyme catalyses a ribonucleoside 5'-phosphate + H2O = a ribonucleoside + phosphate. Its function is as follows. Nucleotidase that shows phosphatase activity on nucleoside 5'-monophosphates. This chain is 5'-nucleotidase SurE, found in Dichelobacter nodosus (strain VCS1703A).